A 666-amino-acid chain; its full sequence is MKSETGYMGFVVVLVFMVLLALQLATLSAPATQIAYSDFRKLAAAAQLDDLEVSPTRITGVLRSASAAAALPASDAEAIKRAGTPWRFSTKRVTDERLIDTLAATGTRYRGADDDTWIGTLASWIVPIAVFALVWNLMLRRPRGGLQDWSGVGKSKPRVYVEAKTGIDFDDIAGIDEAKAELQQIVAFLRAPARYQRLGGKIPKGVLIVGAPGTGKTLLAKAVAGEAGVPFFSTSGSSFVEMFVGVGAARVRDLFEQAQQKAPCIIFIDELDALGKVRGAGLASGNDEREQTLNQLLVEMDGFQANSGVILMAATNRPEILDPALLRPGRFDRHIAIDRPDLTGRRQILSVHVKHVKLGPDVDLGELASRTPGFVGADLANIVNEAALHAAELDKPAIDMSDFDEAIDRAMTGMERKSRVMSEREKITIAHHEAGHALIAQTRAHSDPVKKVSIIPRGIAALGYTQQVPTEDRYVLRKSELLDRLDVLLGGRVAEEIVFGDVSTGAENDLERATEMARHMVARYGMSERIGLATFGDADTQGLSPLVWQRGGERCSESTATRIDDEIQRLLAEAHDRVSRTLKERRGALERIAGYLLEHEVVDHDKLVRLVNDEPTPEPGARDPGGDAAKRSGIGAAPAKPPAEVGSAELRDPARKADNADHSVPQ.

The Cytoplasmic segment spans residues 1-6 (MKSETG). A helical transmembrane segment spans residues 7 to 27 (YMGFVVVLVFMVLLALQLATL). The Periplasmic portion of the chain corresponds to 28 to 116 (SAPATQIAYS…TRYRGADDDT (89 aa)). The chain crosses the membrane as a helical span at residues 117-137 (WIGTLASWIVPIAVFALVWNL). The Cytoplasmic segment spans residues 138 to 666 (MLRRPRGGLQ…ADNADHSVPQ (529 aa)). 210–217 (GAPGTGKT) contacts ATP. His432 contributes to the Zn(2+) binding site. Glu433 is an active-site residue. His436 and Asp509 together coordinate Zn(2+). The segment at 612–666 (NDEPTPEPGARDPGGDAAKRSGIGAAPAKPPAEVGSAELRDPARKADNADHSVPQ) is disordered. Basic and acidic residues-rich tracts occupy residues 620–630 (GARDPGGDAAK) and 649–666 (ELRD…SVPQ).

This sequence in the central section; belongs to the AAA ATPase family. The protein in the C-terminal section; belongs to the peptidase M41 family. In terms of assembly, homohexamer. The cofactor is Zn(2+).

It localises to the cell inner membrane. Functionally, acts as a processive, ATP-dependent zinc metallopeptidase for both cytoplasmic and membrane proteins. Plays a role in the quality control of integral membrane proteins. In Burkholderia pseudomallei (strain 1710b), this protein is ATP-dependent zinc metalloprotease FtsH.